A 271-amino-acid chain; its full sequence is Thiosulfate sulfurtransferase (271 aa).

2 Rhodanese domains span residues 21–129 (SAPE…PLSR) and 159–270 (GAAD…TPVE). Cys230 serves as the catalytic Cysteine persulfide intermediate. Arg235 is a binding site for substrate.

The protein localises to the cytoplasm. It carries out the reaction thiosulfate + hydrogen cyanide = thiocyanate + sulfite + 2 H(+). This chain is Thiosulfate sulfurtransferase (rhdA), found in Azotobacter vinelandii.